The sequence spans 343 residues: Selenide, water dikinase (343 aa).

Sec-13 is an active-site residue. Residue Sec-13 is a non-standard amino acid, selenocysteine. Residues Lys-16 and 44–46 each bind ATP; that span reads TAD. Asp-47 serves as a coordination point for Mg(2+). Residues Asp-64, Asp-87, and 135–137 each bind ATP; that span reads GHT. Asp-87 lines the Mg(2+) pocket. Asp-223 contributes to the Mg(2+) binding site.

This sequence belongs to the selenophosphate synthase 1 family. Class I subfamily. Homodimer. Requires Mg(2+) as cofactor.

It catalyses the reaction hydrogenselenide + ATP + H2O = selenophosphate + AMP + phosphate + 2 H(+). Synthesizes selenophosphate from selenide and ATP. In Geobacter metallireducens (strain ATCC 53774 / DSM 7210 / GS-15), this protein is Selenide, water dikinase.